The sequence spans 278 residues: Diaminopimelate epimerase (278 aa).

Substrate is bound by residues Asn13, Gln46, and Asn66. Catalysis depends on Cys75, which acts as the Proton donor. Substrate-binding positions include 76-77 (GN), Asn159, Asn192, and 210-211 (ER). Catalysis depends on Cys219, which acts as the Proton acceptor. 220–221 (GT) is a substrate binding site.

Belongs to the diaminopimelate epimerase family. Homodimer.

The protein resides in the cytoplasm. The catalysed reaction is (2S,6S)-2,6-diaminopimelate = meso-2,6-diaminopimelate. The protein operates within amino-acid biosynthesis; L-lysine biosynthesis via DAP pathway; DL-2,6-diaminopimelate from LL-2,6-diaminopimelate: step 1/1. In terms of biological role, catalyzes the stereoinversion of LL-2,6-diaminopimelate (L,L-DAP) to meso-diaminopimelate (meso-DAP), a precursor of L-lysine and an essential component of the bacterial peptidoglycan. This is Diaminopimelate epimerase from Laribacter hongkongensis (strain HLHK9).